The primary structure comprises 447 residues: Argininosuccinate synthase (447 aa).

ATP contacts are provided by residues 17 to 25 and Ala43; that span reads AFSGGLDTS. Residue Tyr99 coordinates L-citrulline. Residues Gly129 and Thr131 each contribute to the ATP site. Residues Thr131, Asn135, and Asp136 each contribute to the L-aspartate site. Asn135 contributes to the L-citrulline binding site. Asp136 provides a ligand contact to ATP. L-citrulline is bound by residues Arg139 and Ser192. Asp194 is an ATP binding site. Positions 201, 203, and 280 each coordinate L-citrulline.

It belongs to the argininosuccinate synthase family. Type 2 subfamily. Homotetramer.

Its subcellular location is the cytoplasm. The catalysed reaction is L-citrulline + L-aspartate + ATP = 2-(N(omega)-L-arginino)succinate + AMP + diphosphate + H(+). Its pathway is amino-acid biosynthesis; L-arginine biosynthesis; L-arginine from L-ornithine and carbamoyl phosphate: step 2/3. This Escherichia fergusonii (strain ATCC 35469 / DSM 13698 / CCUG 18766 / IAM 14443 / JCM 21226 / LMG 7866 / NBRC 102419 / NCTC 12128 / CDC 0568-73) protein is Argininosuccinate synthase.